We begin with the raw amino-acid sequence, 170 residues long: Crossover junction endodeoxyribonuclease RuvC (170 aa).

Active-site residues include aspartate 9, glutamate 70, and aspartate 145. Mg(2+) is bound by residues aspartate 9, glutamate 70, and aspartate 145.

Belongs to the RuvC family. Homodimer which binds Holliday junction (HJ) DNA. The HJ becomes 2-fold symmetrical on binding to RuvC with unstacked arms; it has a different conformation from HJ DNA in complex with RuvA. In the full resolvosome a probable DNA-RuvA(4)-RuvB(12)-RuvC(2) complex forms which resolves the HJ. It depends on Mg(2+) as a cofactor.

It is found in the cytoplasm. The enzyme catalyses Endonucleolytic cleavage at a junction such as a reciprocal single-stranded crossover between two homologous DNA duplexes (Holliday junction).. Functionally, the RuvA-RuvB-RuvC complex processes Holliday junction (HJ) DNA during genetic recombination and DNA repair. Endonuclease that resolves HJ intermediates. Cleaves cruciform DNA by making single-stranded nicks across the HJ at symmetrical positions within the homologous arms, yielding a 5'-phosphate and a 3'-hydroxyl group; requires a central core of homology in the junction. The consensus cleavage sequence is 5'-(A/T)TT(C/G)-3'. Cleavage occurs on the 3'-side of the TT dinucleotide at the point of strand exchange. HJ branch migration catalyzed by RuvA-RuvB allows RuvC to scan DNA until it finds its consensus sequence, where it cleaves and resolves the cruciform DNA. The protein is Crossover junction endodeoxyribonuclease RuvC of Chlamydia trachomatis serovar L2 (strain ATCC VR-902B / DSM 19102 / 434/Bu).